Reading from the N-terminus, the 310-residue chain is Integrin-binding sialoprotein (310 aa).

Positions Met1 to Ala16 are cleaved as a signal peptide. Phosphoserine is present on residues Ser31, Ser62, Ser67, Ser75, Ser76, Ser98, and Ser106. Positions Gln61–Arg284 are disordered. The span at Ser62–Asp74 shows a compositional bias: low complexity. Acidic residues-rich tracts occupy residues Ser75–Asn87 and Glu96–Ala108. Asn110 carries N-linked (GlcNAc...) asparagine glycosylation. Phosphothreonine is present on Thr144. A compositionally biased stretch (acidic residues) spans Asp152–Glu174. Ser154 is subject to Phosphoserine. The span at Gln175–Val187 shows a compositional bias: polar residues. Asn178 and Asn183 each carry an N-linked (GlcNAc...) asparagine glycan. Residues Asn198–Val208 show a composition bias toward acidic residues. Over residues Thr209–Asn227 the composition is skewed to polar residues. Phosphoserine is present on Ser273. The Integrin-binding motif motif lies at Arg279–Asp281. Ser300 carries the phosphoserine modification. Tyr306 and Tyr307 each carry sulfotyrosine.

In terms of assembly, monomer. Interacts with integrins; the interaction promotes cell adhesion.

It localises to the secreted. Functionally, binds tightly to hydroxyapatite. Appears to form an integral part of the mineralized matrix. Probably important to cell-matrix interaction. Promotes adhesion and migration of various cells via the alpha-V/beta-3 integrin receptor (ITGAV:ITGB3). This is Integrin-binding sialoprotein (IBSP) from Bos taurus (Bovine).